The chain runs to 335 residues: Tetraacyldisaccharide 4'-kinase (335 aa).

ATP is bound at residue 59 to 66; it reads TAGGNGKT.

It belongs to the LpxK family.

It carries out the reaction a lipid A disaccharide + ATP = a lipid IVA + ADP + H(+). It participates in glycolipid biosynthesis; lipid IV(A) biosynthesis; lipid IV(A) from (3R)-3-hydroxytetradecanoyl-[acyl-carrier-protein] and UDP-N-acetyl-alpha-D-glucosamine: step 6/6. Its function is as follows. Transfers the gamma-phosphate of ATP to the 4'-position of a tetraacyldisaccharide 1-phosphate intermediate (termed DS-1-P) to form tetraacyldisaccharide 1,4'-bis-phosphate (lipid IVA). This is Tetraacyldisaccharide 4'-kinase from Vibrio vulnificus (strain YJ016).